Consider the following 490-residue polypeptide: ATP synthase subunit beta, chloroplastic (490 aa).

An ATP-binding site is contributed by 170 to 177; sequence GGAGVGKT.

The protein belongs to the ATPase alpha/beta chains family. In terms of assembly, F-type ATPases have 2 components, CF(1) - the catalytic core - and CF(0) - the membrane proton channel. CF(1) has five subunits: alpha(3), beta(3), gamma(1), delta(1), epsilon(1). CF(0) has four main subunits: a(1), b(1), b'(1) and c(9-12).

The protein resides in the plastid. Its subcellular location is the chloroplast thylakoid membrane. The enzyme catalyses ATP + H2O + 4 H(+)(in) = ADP + phosphate + 5 H(+)(out). In terms of biological role, produces ATP from ADP in the presence of a proton gradient across the membrane. The catalytic sites are hosted primarily by the beta subunits. This chain is ATP synthase subunit beta, chloroplastic, found in Ipomoea wrightii (Wright's morning glory).